A 37-amino-acid chain; its full sequence is VCRDWFKETACRHAKSLGNCRTSQKYRANCAKTCELC.

One can recognise a ShKT domain in the interval 2-37 (CRDWFKETACRHAKSLGNCRTSQKYRANCAKTCELC). 3 disulfides stabilise this stretch: Cys-2–Cys-37, Cys-11–Cys-30, and Cys-20–Cys-34. Positions 25-26 (KY) are crucial for binding to potassium channels.

The protein belongs to the sea anemone type 1 potassium channel toxin family. Type 1b subfamily.

The protein resides in the secreted. The protein localises to the nematocyst. Its function is as follows. Inhibits voltage-dependent potassium channels of the Kv1 family (Kv1.1/KCNA1 (Kd=6 nM), Kv1.2/KCNA2 (Kd=15 nM), Kv1.3/KCNA3 (Kd=10-39 nM), Kv1.6/KCNA6, and KCa3.1/KCNN4 (Kd=172 nM)). The sequence is that of Kappa-actitoxin-Bgr1a from Bunodosoma granuliferum (Red warty sea anemone).